Here is a 295-residue protein sequence, read N- to C-terminus: Sulfotransferase 1E1 (295 aa).

48-53 (KSGTTW) lines the 3'-phosphoadenylyl sulfate pocket. 106-108 (KSH) contributes to the substrate binding site. His-108 (proton acceptor) is an active-site residue. 3'-phosphoadenylyl sulfate-binding residues include Arg-130, Ser-138, and Tyr-193. A phosphoserine; by PKA mark is found at Ser-216 and Ser-228. 3'-phosphoadenylyl sulfate contacts are provided by residues 227 to 232 (TSFQEM) and 257 to 259 (RKG).

Belongs to the sulfotransferase 1 family. As to quaternary structure, homodimer.

The protein resides in the cytoplasm. It is found in the cytosol. It carries out the reaction estrone + 3'-phosphoadenylyl sulfate = estrone 3-sulfate + adenosine 3',5'-bisphosphate + H(+). The catalysed reaction is (24S)-hydroxycholesterol + 3'-phosphoadenylyl sulfate = (24S)-hydroxycholesterol 3-sulfate + adenosine 3',5'-bisphosphate + H(+). It catalyses the reaction 17beta-estradiol + 3'-phosphoadenylyl sulfate = 17beta-estradiol 3-sulfate + adenosine 3',5'-bisphosphate + H(+). The enzyme catalyses 3beta-hydroxyandrost-5-en-17-one + 3'-phosphoadenylyl sulfate = dehydroepiandrosterone 3-sulfate + adenosine 3',5'-bisphosphate + H(+). It carries out the reaction 4-ethylphenol + 3'-phosphoadenylyl sulfate = 4-ethylphenyl sulfate + adenosine 3',5'-bisphosphate + H(+). Its activity is regulated as follows. Inhibited by estradiol. Sulfotransferase that utilizes 3'-phospho-5'-adenylyl sulfate (PAPS) as sulfonate donor to catalyze the sulfate conjugation of estradiol and estrone. Is a key enzyme in estrogen homeostasis, the sulfation of estrogens leads to their inactivation. Also sulfates dehydroepiandrosterone (DHEA), pregnenolone, (24S)-hydroxycholesterol and xenobiotic compounds like ethinylestradiol, equalenin, diethyl stilbesterol and 1-naphthol at significantly lower efficiency. Does not sulfonate cortisol, testosterone and dopamine. May play a role in gut microbiota-host metabolic interaction. O-sulfonates 4-ethylphenol (4-EP), a dietary tyrosine-derived metabolite produced by gut bacteria. The product 4-EPS crosses the blood-brain barrier and may negatively regulate oligodendrocyte maturation and myelination, affecting the functional connectivity of different brain regions associated with the limbic system. The chain is Sulfotransferase 1E1 (SULT1E1) from Bos taurus (Bovine).